Here is a 294-residue protein sequence, read N- to C-terminus: Acetyl-coenzyme A carboxylase carboxyl transferase subunit beta (294 aa).

The CoA carboxyltransferase N-terminal domain maps to 30–294 (IMTKCPECKK…PGVGGEVDGE (265 aa)). Zn(2+) contacts are provided by cysteine 34, cysteine 37, cysteine 53, and cysteine 56. The segment at 34-56 (CPECKKIMYTKELQKNLMVCNYC) adopts a C4-type zinc-finger fold.

The protein belongs to the AccD/PCCB family. As to quaternary structure, acetyl-CoA carboxylase is a heterohexamer composed of biotin carboxyl carrier protein (AccB), biotin carboxylase (AccC) and two subunits each of ACCase subunit alpha (AccA) and ACCase subunit beta (AccD). Zn(2+) is required as a cofactor.

It is found in the cytoplasm. It catalyses the reaction N(6)-carboxybiotinyl-L-lysyl-[protein] + acetyl-CoA = N(6)-biotinyl-L-lysyl-[protein] + malonyl-CoA. Its pathway is lipid metabolism; malonyl-CoA biosynthesis; malonyl-CoA from acetyl-CoA: step 1/1. In terms of biological role, component of the acetyl coenzyme A carboxylase (ACC) complex. Biotin carboxylase (BC) catalyzes the carboxylation of biotin on its carrier protein (BCCP) and then the CO(2) group is transferred by the transcarboxylase to acetyl-CoA to form malonyl-CoA. The sequence is that of Acetyl-coenzyme A carboxylase carboxyl transferase subunit beta from Listeria monocytogenes serovar 1/2a (strain ATCC BAA-679 / EGD-e).